Reading from the N-terminus, the 411-residue chain is Putative competence-damage inducible protein (411 aa).

It belongs to the CinA family.

The chain is Putative competence-damage inducible protein from Clostridium acetobutylicum (strain ATCC 824 / DSM 792 / JCM 1419 / IAM 19013 / LMG 5710 / NBRC 13948 / NRRL B-527 / VKM B-1787 / 2291 / W).